The following is a 690-amino-acid chain: Signal peptide peptidase-like 2C (690 aa).

Residues 1-28 form the signal peptide; sequence MACLGSLHPLGSLLLLFLLLLLSPEARG. Over 29-192 the chain is Lumenal; that stretch reads EYGLVRVVSK…APLEPVTDYN (164 aa). In terms of domain architecture, PA spans 87 to 166; that stretch reads DSSPRQRPLH…AVLRYTDMLD (80 aa). N-linked (GlcNAc...) asparagine glycosylation occurs at asparagine 106. A helical transmembrane segment spans residues 193–213; sequence MAIIFILAVGTVAAGGYWAGL. Residues 214-260 are Cytoplasmic-facing; the sequence is MEANKLQRRQAQRGGGLGGHNQQQTVAAERSQRAWEDDDFEDAPMDF. A helical membrane pass occupies residues 261 to 283; that stretch reads TPAMTGAVVTMSCSIMILLYFFY. Residue aspartate 284 is a topological domain, lumenal. Residues 285-307 traverse the membrane as a helical segment; sequence CFVYVMIGIFSLGASTGLYSCLA. At 308–328 the chain is on the cytoplasmic side; sequence PILCHLPLWRYQWVLPGQRVS. The chain crosses the membrane as a helical span at residues 329 to 349; sequence VTWPLLLLAGLCAMVTVLWVI. The Lumenal portion of the chain corresponds to 350–354; sequence HRNED. A helical membrane pass occupies residues 355–373; that stretch reads HWAWLLQDTLGVAYCLFVL. The Cytoplasmic segment spans residues 374–384; it reads RRVRLPTFKNC. The chain crosses the membrane as a helical span at residues 385–405; sequence TLFLLALLAFDVFFVFITPLF. Aspartate 395 is a catalytic residue. Topologically, residues 406-448 are lumenal; sequence TKTGESIMVEVASGPADSSSHERLPMVLKVPRLSFSALTLCNQ. Residues 449 to 469 form a helical membrane-spanning segment; the sequence is PFSILGFGDIVVPGFLVAYCH. Aspartate 457 is a catalytic residue. Over 470–482 the chain is Cytoplasmic; sequence RFDMQVQSRQVYY. Residues 483 to 503 form a helical membrane-spanning segment; it reads MACTVAYAVGLLVTFVAMILM. Glutamine 504 is a topological domain (lumenal). A helical transmembrane segment spans residues 505–525; it reads MGQPALLYLVSSTLLTSLAVA. Positions 508–510 match the PAL motif; that stretch reads PAL. Residues 526–690 lie on the Cytoplasmic side of the membrane; it reads TCRQEFTLFW…KKSMSAQAPL (165 aa). Residues 564–573 are compositionally biased toward basic and acidic residues; sequence EDAKDSRTTN. The segment at 564–633 is disordered; the sequence is EDAKDSRTTN…DPNELPSGSP (70 aa). Polar residues predominate over residues 615-624; it reads SEGWSDTNLD.

The protein belongs to the peptidase A22B family. As to quaternary structure, interacts (via active sites) with FREY; the interaction stabilizes FREY1 protein and inhibits SPPL2C proteolytic activity. Glycosylated. Highly expressed in testis where it is primarily localised in spermatids (at protein level).

It localises to the endoplasmic reticulum membrane. Its function is as follows. Sperm-specific intramembrane-cleaving aspartic protease (I-CLiP) that cleaves distinct tail-anchored proteins and SNARE proteins. In elongated spermatids, modulates intracellular Ca(2+) homeostasis by controlling PLN abundance through proteolytic cleavage. During spermatogenesis, processes SNARE proteins and impacts vesicular trafficking which supports compartmental reorganization in maturating spermatids and may play a role in formation of the acrosome. In round spermatids, acts as a scaffold protein supporting FREY1 in IZUMO1 recruitment at the endoplasmic reticulum membrane and coordination of IZUMO1 complex assembly. Stabilizes FREY1 at the endoplasmic reticulum membrane through interaction. May recruit IZUMO1 interaction partners. In terms of biological role, no difference in cleavage specificity compared to isoform 1. This Mus musculus (Mouse) protein is Signal peptide peptidase-like 2C.